The sequence spans 372 residues: Probable butyrate kinase (372 aa).

It belongs to the acetokinase family.

The protein localises to the cytoplasm. The catalysed reaction is butanoate + ATP = butanoyl phosphate + ADP. In Oleidesulfovibrio alaskensis (strain ATCC BAA-1058 / DSM 17464 / G20) (Desulfovibrio alaskensis), this protein is Probable butyrate kinase.